A 302-amino-acid chain; its full sequence is ICOS ligand (302 aa).

Positions 1–18 (MRLGSPGLLFLLFSSLRA) are cleaved as a signal peptide. Residues 19 to 129 (DTQEKEVRAM…LGFQEVLSVE (111 aa)) enclose the Ig-like V-type domain. The Extracellular portion of the chain corresponds to 19–256 (DTQEKEVRAM…VSTGEKNAAT (238 aa)). Residues Cys37 and Cys113 are joined by a disulfide bond. N-linked (GlcNAc...) asparagine glycosylation is found at Asn70, Asn137, Asn173, Asn186, and Asn225. The Ig-like C2-type domain occupies 141 to 227 (PVVSAPHSPS…ENVLLQQNLT (87 aa)). A disulfide bond links Cys158 and Cys216. The helical transmembrane segment at 257 to 277 (WSILAVLCLLVVVAVAIGWVC) threads the bilayer. Residues 278-302 (RDRCLQHSYAGAWAVSPETELTGHV) lie on the Cytoplasmic side of the membrane.

This sequence belongs to the immunoglobulin superfamily. BTN/MOG family. As to quaternary structure, interacts with CTLA4 (in vitro). In terms of tissue distribution, expressed on peripheral blood B-cells and monocytes, as well as on monocyte-derived dendritic cells (at protein level). As to expression, widely expressed (brain, heart, kidney, liver, lung, pancreas, placenta, skeletal muscle, bone marrow, colon, ovary, prostate, testis, lymph nodes, leukocytes, spleen, thymus and tonsil). Detected only in lymph nodes, leukocytes and spleen. Expressed on activated monocytes and dendritic cells.

Its subcellular location is the cell membrane. Its function is as follows. Ligand for the T-cell-specific cell surface receptor ICOS. Acts as a costimulatory signal for T-cell proliferation and cytokine secretion. Also induces B-cell proliferation and differentiation into plasma cells. Could play an important role in mediating local tissue responses to inflammatory conditions, as well as in modulating the secondary immune response by co-stimulating memory T-cell function. In endothelial cells, required for proper neutrophil transmigration in response to chemoattractants, such as CXCL8/IL8 or N-formyl-methionyl peptides (fMLP). The chain is ICOS ligand (ICOSLG) from Homo sapiens (Human).